The primary structure comprises 357 residues: 4-hydroxymandelate oxidase (357 aa).

Residues methionine 1–valine 357 enclose the FMN hydroxy acid dehydrogenase domain. Position 126 (glutamine 126) interacts with FMN. Tyrosine 128 serves as a coordination point for a 2-oxocarboxylate. Threonine 154 contacts FMN. Arginine 163 provides a ligand contact to a 2-oxocarboxylate. FMN is bound at residue lysine 228. Residue histidine 252 is the Proton acceptor of the active site. Arginine 255 provides a ligand contact to a 2-oxocarboxylate. FMN is bound by residues aspartate 283–arginine 287 and glycine 306–arginine 307.

It belongs to the FMN-dependent alpha-hydroxy acid dehydrogenase family. FMN serves as cofactor.

The enzyme catalyses (S)-4-hydroxymandelate + O2 = 4-hydroxyphenylglyoxylate + H2O2. The protein operates within antibiotic biosynthesis; vancomycin biosynthesis. In terms of biological role, catalyzes the oxidation of p-hydroxymandelate to p-hydroxybenzoylformate in the biosynthesis of L-(4-hydroxyphenyl)glycine and L-(3,5-dihydroxyphenyl)glycine, 2 non-proteinogenic amino acids occurring in the vancomycin group of antibiotics. This is 4-hydroxymandelate oxidase (hmo) from Amycolatopsis orientalis (Nocardia orientalis).